A 395-amino-acid chain; its full sequence is Type II restriction enzyme BsuFI (395 aa).

Homodimer. The cofactor is Mg(2+).

The enzyme catalyses Endonucleolytic cleavage of DNA to give specific double-stranded fragments with terminal 5'-phosphates.. Its function is as follows. A P subtype restriction enzyme that recognizes the double-stranded sequence 5'-CCGG-3' and cleaves after C-1. This is Type II restriction enzyme BsuFI (hsdFR) from Bacillus subtilis.